The following is a 151-amino-acid chain: Non-specific lipid transfer protein GPI-anchored 30 (151 aa).

A signal peptide spans 1–22; that stretch reads MMMGMKFFSFYVVLLLVAASSG. 4 cysteine pairs are disulfide-bonded: C32–C69, C39–C53, C54–C97, and C67–C106. N-linked (GlcNAc...) asparagine glycosylation occurs at N44. A lipid anchor (GPI-anchor amidated serine) is attached at S120. A propeptide spans 121 to 151 (removed in mature form); the sequence is SSIGNTFSQSYWMTTLAIAATVLSYCHHIIS.

This sequence belongs to the plant LTP family. As to expression, expressed in vascular tissues of all organs. Expressed in seedlings, preferentially in hypocotyls and roots. Also observed in siliques.

It localises to the cell membrane. In terms of biological role, lipid transfer protein that promotes the number of phloem (pro)cambial and pericycle cells. The chain is Non-specific lipid transfer protein GPI-anchored 30 from Arabidopsis thaliana (Mouse-ear cress).